A 158-amino-acid chain; its full sequence is Glutathione peroxidase homolog BsaA (158 aa).

Residue Cys36 is part of the active site.

Belongs to the glutathione peroxidase family.

The protein is Glutathione peroxidase homolog BsaA (bsaA) of Staphylococcus epidermidis (strain ATCC 12228 / FDA PCI 1200).